Here is a 599-residue protein sequence, read N- to C-terminus: Elongation factor 4 (599 aa).

The tr-type G domain occupies lysine 2–glutamate 184. Residues aspartate 14–threonine 19 and asparagine 131–aspartate 134 each bind GTP.

The protein belongs to the TRAFAC class translation factor GTPase superfamily. Classic translation factor GTPase family. LepA subfamily.

Its subcellular location is the cell inner membrane. The enzyme catalyses GTP + H2O = GDP + phosphate + H(+). Required for accurate and efficient protein synthesis under certain stress conditions. May act as a fidelity factor of the translation reaction, by catalyzing a one-codon backward translocation of tRNAs on improperly translocated ribosomes. Back-translocation proceeds from a post-translocation (POST) complex to a pre-translocation (PRE) complex, thus giving elongation factor G a second chance to translocate the tRNAs correctly. Binds to ribosomes in a GTP-dependent manner. This chain is Elongation factor 4, found in Escherichia coli O8 (strain IAI1).